A 166-amino-acid chain; its full sequence is Chorion protein S18 (166 aa).

The signal sequence occupies residues 1 to 17 (MMKFMCLFVCAIAAVSA).

Belongs to the chorion protein S15/S18 family.

It is found in the secreted. Its function is as follows. Chorion membrane (egg shell) protein; plays a role in protecting the egg from the environment. The sequence is that of Chorion protein S18 (Cp18) from Drosophila grimshawi (Hawaiian fruit fly).